The following is a 182-amino-acid chain: Large ribosomal subunit protein uL6 (182 aa).

This sequence belongs to the universal ribosomal protein uL6 family. As to quaternary structure, part of the 50S ribosomal subunit.

Functionally, this protein binds to the 23S rRNA, and is important in its secondary structure. It is located near the subunit interface in the base of the L7/L12 stalk, and near the tRNA binding site of the peptidyltransferase center. The sequence is that of Large ribosomal subunit protein uL6 from Methanococcus maripaludis (strain C6 / ATCC BAA-1332).